The sequence spans 903 residues: Protein translocase subunit SecA (903 aa).

ATP contacts are provided by residues Q87, 105–109 (GEGKT), and D494. The interval 861–883 (SGSQGAAPRQPVRAEGKKVGRND) is disordered. Residues 872-881 (VRAEGKKVGR) are compositionally biased toward basic and acidic residues. Residues C885, C887, C896, and C897 each contribute to the Zn(2+) site.

It belongs to the SecA family. Monomer and homodimer. Part of the essential Sec protein translocation apparatus which comprises SecA, SecYEG and auxiliary proteins SecDF. Other proteins may also be involved. It depends on Zn(2+) as a cofactor.

The protein resides in the cell membrane. It is found in the cytoplasm. It carries out the reaction ATP + H2O + cellular proteinSide 1 = ADP + phosphate + cellular proteinSide 2.. Its function is as follows. Part of the Sec protein translocase complex. Interacts with the SecYEG preprotein conducting channel. Has a central role in coupling the hydrolysis of ATP to the transfer of proteins into and across the cell membrane, serving as an ATP-driven molecular motor driving the stepwise translocation of polypeptide chains across the membrane. In Symbiobacterium thermophilum (strain DSM 24528 / JCM 14929 / IAM 14863 / T), this protein is Protein translocase subunit SecA.